Reading from the N-terminus, the 120-residue chain is Flagellar protein FliT (120 aa).

The tract at residues 1 to 50 (MERHQHLLSEYQQILTLSEQMLVLATEGNWDALVDLEMTYLKAVESTANI) is required for homodimerization. Positions 60–98 (LQDLLREKLRAILDNEIEIKRLLQLRLDRLSDLVGQSTK) are fliD binding.

Belongs to the FliT family. Homodimer. Interacts with FliD and FlhC.

The protein resides in the cytoplasm. It localises to the cytosol. Its function is as follows. Dual-function protein that regulates the transcription of class 2 flagellar operons and that also acts as an export chaperone for the filament-capping protein FliD. As a transcriptional regulator, acts as an anti-FlhDC factor; it directly binds FlhC, thus inhibiting the binding of the FlhC/FlhD complex to class 2 promoters, resulting in decreased expression of class 2 flagellar operons. As a chaperone, effects FliD transition to the membrane by preventing its premature polymerization, and by directing it to the export apparatus. This is Flagellar protein FliT from Yersinia enterocolitica serotype O:8 / biotype 1B (strain NCTC 13174 / 8081).